Consider the following 207-residue polypeptide: Large ribosomal subunit protein bL25 (207 aa).

Belongs to the bacterial ribosomal protein bL25 family. CTC subfamily. In terms of assembly, part of the 50S ribosomal subunit; part of the 5S rRNA/L5/L18/L25 subcomplex. Contacts the 5S rRNA. Binds to the 5S rRNA independently of L5 and L18.

In terms of biological role, this is one of the proteins that binds to the 5S RNA in the ribosome where it forms part of the central protuberance. This chain is Large ribosomal subunit protein bL25, found in Dictyoglomus turgidum (strain DSM 6724 / Z-1310).